A 126-amino-acid polypeptide reads, in one-letter code: Cystatin-like cysteine protease inhibitor EPIC1 (126 aa).

The first 21 residues, 1-21, serve as a signal peptide directing secretion; it reads MTFLRPILALLAATALVTTSA. N46 is a glycosylation site (N-linked (GlcNAc...) asparagine). Residues 69–73 carry the Secondary area of contact motif; that stretch reads QVVSG.

The protein belongs to the cystatin family. In terms of assembly, interacts with the host papain-like cysteine protease RCR3. Interacts with the host papain-like cysteine protease C14.

The protein resides in the secreted. Functionally, secreted effector that interacts with and inhibits the pathogenesis-related papain-like cysteine proteases C14 and RCR3 of host plants. Inhibition of host proteases by a pathogen extracellular protease inhibitor forms a specific type of defense-counterdefense mechanism between plants and microbial pathogens. This is Cystatin-like cysteine protease inhibitor EPIC1 from Phytophthora infestans (Potato late blight agent).